A 145-amino-acid polypeptide reads, in one-letter code: Secreted RxLR effector protein 100 (145 aa).

The signal sequence occupies residues 1-19 (MRYLLLTFFTFHCQMVADA). Positions 27–30 (RLLR) match the RxLR motif. The disordered stretch occupies residues 38–77 (SGEGKIEEAGMIVTTGAPTPENETMEHNEVPQSTTDTDQK). N59 carries an N-linked (GlcNAc...) asparagine glycan.

This sequence belongs to the RxLR effector family.

The protein resides in the secreted. It localises to the host nucleus. In terms of biological role, secreted effector that dos not suppress the host cell death induced by cell death-inducing proteins. This chain is Secreted RxLR effector protein 100, found in Plasmopara viticola (Downy mildew of grapevine).